We begin with the raw amino-acid sequence, 387 residues long: 2-deoxystreptamine glucosyltransferase (387 aa).

Belongs to the glycosyltransferase group 1 family.

It carries out the reaction 2-deoxystreptamine + UDP-N-acetyl-alpha-D-glucosamine = 2'-N-acetylparomamine + UDP + H(+). The enzyme catalyses 2-deoxystreptamine + UDP-alpha-D-glucose = 2'-deamino-2'-hydroxyparomamine + UDP + H(+). The protein operates within antibiotic biosynthesis; kanamycin biosynthesis. Its function is as follows. Glycosyltransferase involved in the biosynthesis of kanamycin by mediating conversion of 2-deoxystreptamine (2-DOS) to 2'-N-acetylparomamine using UDP-alpha-D-glucose as sugar donor. Can also accept UDP-alpha-D-glucosamine, but with a much lower activity compared to UDP-alpha-D-glucose. This is 2-deoxystreptamine glucosyltransferase (kanF) from Streptomyces kanamyceticus.